We begin with the raw amino-acid sequence, 185 residues long: Elongation factor P (185 aa).

The protein belongs to the elongation factor P family.

It localises to the cytoplasm. The protein operates within protein biosynthesis; polypeptide chain elongation. Its function is as follows. Involved in peptide bond synthesis. Stimulates efficient translation and peptide-bond synthesis on native or reconstituted 70S ribosomes in vitro. Probably functions indirectly by altering the affinity of the ribosome for aminoacyl-tRNA, thus increasing their reactivity as acceptors for peptidyl transferase. The chain is Elongation factor P from Geobacillus kaustophilus (strain HTA426).